A 489-amino-acid polypeptide reads, in one-letter code: Interferon gamma receptor 1 (489 aa).

The first 17 residues, Met-1–Ala-17, serve as a signal peptide directing secretion. Topologically, residues Glu-18 to Gly-245 are extracellular. Residues Asn-34, Asn-79, and Asn-86 are each glycosylated (N-linked (GlcNAc...) asparagine). Cysteines 77 and 85 form a disulfide. A disulfide bridge links Cys-122 with Cys-167. Residue Asn-179 is glycosylated (N-linked (GlcNAc...) asparagine). 2 cysteine pairs are disulfide-bonded: Cys-195–Cys-200 and Cys-214–Cys-235. A glycan (N-linked (GlcNAc...) asparagine) is linked at Asn-240. A helical membrane pass occupies residues Ser-246–Ile-266. Topologically, residues Cys-267–Ser-489 are cytoplasmic. Residues Ala-329–Glu-437 are disordered. Residues His-335–Glu-348 are compositionally biased toward basic and acidic residues. Residues Leu-349–Glu-360 show a composition bias toward polar residues. The residue at position 369 (Ser-369) is a Phosphoserine. A Phosphothreonine modification is found at Thr-372. Ser-378 is subject to Phosphoserine. The span at Ser-379–Ser-391 shows a compositional bias: low complexity. A compositionally biased stretch (basic and acidic residues) spans Asn-401–Phe-412. Ser-403 carries the phosphoserine modification. The segment covering Asp-415–Glu-429 has biased composition (low complexity). Tyr-457 bears the Phosphotyrosine mark.

It belongs to the type II cytokine receptor family. As to quaternary structure, monomer. Heterodimer with IFNGR2, to form the IFNG receptor complex. Interacts with JAK1. Interacts (when phosphorylated) with STAT1. Interacts with SOCS1. In terms of processing, phosphorylated at Ser/Thr residues. Phosphorylation of Tyr-457 is required for IFNG receptor signal transduction. Influenza virus infection leads to phosphorylation in a CSNK1A1-dependent manner. Ubiquitinated after phosphorylation in a CSNK1A1-dependent manner, leading to the lysosome-dependent degradation. Proteasomally degraded through 'Lys-48'-mediated ubiquitination. Ubiquitination is necessary for efficient IFNGR1 signaling.

It localises to the cell membrane. Functionally, receptor subunit for interferon gamma/INFG that plays crucial roles in antimicrobial, antiviral, and antitumor responses by activating effector immune cells and enhancing antigen presentation. Associates with transmembrane accessory factor IFNGR2 to form a functional receptor. Upon ligand binding, the intracellular domain of IFNGR1 opens out to allow association of downstream signaling components JAK1 and JAK2. In turn, activated JAK1 phosphorylates IFNGR1 to form a docking site for STAT1. Subsequent phosphorylation of STAT1 leads to dimerization, translocation to the nucleus, and stimulation of target gene transcription. STAT3 can also be activated in a similar manner although activation seems weaker. IFNGR1 intracellular domain phosphorylation also provides a docking site for SOCS1 that regulates the JAK-STAT pathway by competing with STAT1 binding to IFNGR1. This is Interferon gamma receptor 1 from Homo sapiens (Human).